Here is a 172-residue protein sequence, read N- to C-terminus: MFFHLTLEKDLHMHPKHCGPNLFTIATQQLYSEVEGTCTGRYGFIITITSVDFLSKGKVLESSGYVVFNVKYKAIIFKPFKGEVLDAIVTKVTNLGFFAEAGPLSIFVSTQLIPSDMIFDAQSAVPCFVSEDGSSKISKDDEVRLQIKGTRVDATEIFAIGSIREDYLGVIG.

Belongs to the eukaryotic RPB7/RPC8 RNA polymerase subunit family. As to quaternary structure, component of the RNA polymerase II (Pol II) complex consisting of 12 subunits. RPB4 and RPB7 form a subcomplex that protrudes from the 10-subunit Pol II core complex.

The protein localises to the nucleus. Functionally, DNA-dependent RNA polymerase catalyzes the transcription of DNA into RNA using the four ribonucleoside triphosphates as substrates. Component of RNA polymerase II which synthesizes mRNA precursors and many functional non-coding RNAs. Pol II is the central component of the basal RNA polymerase II transcription machinery. It is composed of mobile elements that move relative to each other. RPB7 is part of a subcomplex with RPB4 that binds to a pocket formed by RPB1, RPB2 and RPB6 at the base of the clamp element. The RPB4-RPB7 subcomplex seems to lock the clamp via RPB7 in the closed conformation thus preventing double-stranded DNA to enter the active site cleft. The RPB4-RPB7 subcomplex binds single-stranded DNA and RNA. This Dictyostelium discoideum (Social amoeba) protein is DNA-directed RNA polymerase II subunit rpb7 (polr2g).